A 113-amino-acid polypeptide reads, in one-letter code: MKKKYRYLEDSKNYTSTLYSLLVDNVDKPGYSDICDVLLQVSKKLDNTQSVEALINRLVNYIRITASTYKIIFSKKEEELIIKLGVIGQKAGLNGQYMADFSDKSQFYSVFDQ.

Belongs to the immunity protein EntA family.

In terms of biological role, imparts immunity to mesentericin-Y105 to naturally sensitive host strains. The sequence is that of Probable mesentericin-Y105 immunity protein (mesI) from Leuconostoc mesenteroides.